The sequence spans 926 residues: BTB/POZ domain-containing protein KCTD19 (926 aa).

A BTB 1 domain is found at 18-72 (NVGGWHFSVPRSKLSQFPDSLLWKEASALTSSESQRLFIDRDGSTFRHVHYYLYT). Phosphoserine is present on Ser270. The BTB 2 domain maps to 398 to 485 (IKVYVGSHWY…YHIPSLSEAL (88 aa)). The interval 673 to 751 (GSEAASQPST…PAPEQPLPEA (79 aa)) is disordered. Positions 730 to 742 (DWSKQRTKERESP) are enriched in basic and acidic residues.

In terms of assembly, identified in a complex with ZNF541, HDAC1 and HSPA2. Identified in a complex with ZNF541 and HDAC1. Identified in a complex with HDAC1, HDAC2, DNTTIP1 and ZNF541.

The protein resides in the nucleus. Its function is as follows. Transcription regulator which is essential for male fertility and for the completion of meiotic prophase in spermatocytes. Regulates progression of the pachytene stage of meiotic prophase and promotes the transcriptional activation activity ZNF541. Required for the organization of chromosomes during metaphase I. The chain is BTB/POZ domain-containing protein KCTD19 (KCTD19) from Homo sapiens (Human).